The chain runs to 378 residues: Transcription elongation factor TFIIS (378 aa).

Met-1 bears the N-acetylmethionine mark. The TFIIS N-terminal domain occupies 10-89 (EGAKKAADAA…EIWKKVVIEE (80 aa)). In terms of domain architecture, TFIIS central spans 210 to 333 (VRDKIRELLV…DCERGLAAKA (124 aa)). The TFIIS-type zinc finger occupies 336-376 (DQFKCGRCGQRKCTYYQMQTRSADEPMTTYVTCVNCDNHWK). The Zn(2+) site is built by Cys-340, Cys-343, Cys-368, and Cys-371.

In terms of tissue distribution, expressed in roots, leaves and flowers.

It is found in the nucleus. Necessary for efficient RNA polymerase II transcription elongation past template-encoded arresting sites. Involved in the control of seed dormancy and germination. In Arabidopsis thaliana (Mouse-ear cress), this protein is Transcription elongation factor TFIIS.